A 334-amino-acid chain; its full sequence is MPTDAKRPLQLNDQGQLRHFISLDGLPRELLTEILDTADSFLEVGARAVKKVPLLRGKTVCNVFFENSTRTRTTFELAAQRLSADVISLNVSTSSTSKGETLTDTLRNLEAMAADMFVVRHSDSGAAHFIAEHVSPNVAVINGGDGRHAHPTQGMLDMLTIRRHKGNFEQLSVAIVGDILHSRVARSNMLALKTLGCPDIRVIAPRTLLPIGLEEQYGVRVFTNADEGLKDVDVVIMLRLQRERMQGGLLPSEGEFFKLYGLTEKRLKLAKPDAIVMHPGPINRGVEIESAVADGAQSVILNQVTYGIAIRMAVLSMAMSGQNTQRQLEQEDAE.

2 residues coordinate carbamoyl phosphate: Arg70 and Thr71. Residue Lys98 participates in L-aspartate binding. The carbamoyl phosphate site is built by Arg120, His150, and Gln153. Arg183 and Arg239 together coordinate L-aspartate. 2 residues coordinate carbamoyl phosphate: Gly280 and Pro281.

The protein belongs to the aspartate/ornithine carbamoyltransferase superfamily. ATCase family. In terms of assembly, heterododecamer (2C3:3R2) of six catalytic PyrB chains organized as two trimers (C3), and six regulatory PyrI chains organized as three dimers (R2).

It catalyses the reaction carbamoyl phosphate + L-aspartate = N-carbamoyl-L-aspartate + phosphate + H(+). The protein operates within pyrimidine metabolism; UMP biosynthesis via de novo pathway; (S)-dihydroorotate from bicarbonate: step 2/3. Catalyzes the condensation of carbamoyl phosphate and aspartate to form carbamoyl aspartate and inorganic phosphate, the committed step in the de novo pyrimidine nucleotide biosynthesis pathway. The sequence is that of Aspartate carbamoyltransferase catalytic subunit from Pseudomonas aeruginosa (strain LESB58).